The following is a 480-amino-acid chain: Aspartyl/glutamyl-tRNA(Asn/Gln) amidotransferase subunit B (480 aa).

Belongs to the GatB/GatE family. GatB subfamily. As to quaternary structure, heterotrimer of A, B and C subunits.

It catalyses the reaction L-glutamyl-tRNA(Gln) + L-glutamine + ATP + H2O = L-glutaminyl-tRNA(Gln) + L-glutamate + ADP + phosphate + H(+). The enzyme catalyses L-aspartyl-tRNA(Asn) + L-glutamine + ATP + H2O = L-asparaginyl-tRNA(Asn) + L-glutamate + ADP + phosphate + 2 H(+). In terms of biological role, allows the formation of correctly charged Asn-tRNA(Asn) or Gln-tRNA(Gln) through the transamidation of misacylated Asp-tRNA(Asn) or Glu-tRNA(Gln) in organisms which lack either or both of asparaginyl-tRNA or glutaminyl-tRNA synthetases. The reaction takes place in the presence of glutamine and ATP through an activated phospho-Asp-tRNA(Asn) or phospho-Glu-tRNA(Gln). The polypeptide is Aspartyl/glutamyl-tRNA(Asn/Gln) amidotransferase subunit B (Streptococcus pneumoniae (strain P1031)).